A 299-amino-acid polypeptide reads, in one-letter code: Acetylglutamate kinase (299 aa).

Residues 72–73, Arg-94, and Asn-196 each bind substrate; that span reads GG.

Belongs to the acetylglutamate kinase family. ArgB subfamily.

The protein localises to the cytoplasm. It carries out the reaction N-acetyl-L-glutamate + ATP = N-acetyl-L-glutamyl 5-phosphate + ADP. It functions in the pathway amino-acid biosynthesis; L-arginine biosynthesis; N(2)-acetyl-L-ornithine from L-glutamate: step 2/4. In terms of biological role, catalyzes the ATP-dependent phosphorylation of N-acetyl-L-glutamate. In Burkholderia vietnamiensis (strain G4 / LMG 22486) (Burkholderia cepacia (strain R1808)), this protein is Acetylglutamate kinase.